A 460-amino-acid chain; its full sequence is 7-cyano-7-deazaguanine synthase 2 (460 aa).

Residue C2 is the For GATase activity of the active site. The 224-residue stretch at 2-225 (CSVTGVLIIK…PYSIVEVNDN (224 aa)) folds into the Glutamine amidotransferase type-2 domain. 245–255 (ASGGLDSTVAA) contributes to the ATP binding site. Zn(2+)-binding residues include C426, C434, C437, and C440.

This sequence belongs to the QueC family. It depends on Zn(2+) as a cofactor.

It catalyses the reaction 7-carboxy-7-deazaguanine + NH4(+) + ATP = 7-cyano-7-deazaguanine + ADP + phosphate + H2O + H(+). Its pathway is purine metabolism; 7-cyano-7-deazaguanine biosynthesis. Its function is as follows. Catalyzes the ATP-dependent conversion of 7-carboxy-7-deazaguanine (CDG) to 7-cyano-7-deazaguanine (preQ(0)). The polypeptide is 7-cyano-7-deazaguanine synthase 2 (queC2) (Sulfurisphaera tokodaii (strain DSM 16993 / JCM 10545 / NBRC 100140 / 7) (Sulfolobus tokodaii)).